We begin with the raw amino-acid sequence, 576 residues long: uncharacterized protein (576 aa).

The protein belongs to the FadG family.

This is an uncharacterized protein from Bacillus subtilis (strain 168).